Reading from the N-terminus, the 319-residue chain is Pantothenate kinase (319 aa).

97–104 lines the ATP pocket; it reads GSVAVGKS.

It belongs to the prokaryotic pantothenate kinase family.

It is found in the cytoplasm. The enzyme catalyses (R)-pantothenate + ATP = (R)-4'-phosphopantothenate + ADP + H(+). It participates in cofactor biosynthesis; coenzyme A biosynthesis; CoA from (R)-pantothenate: step 1/5. The protein is Pantothenate kinase of Mesorhizobium japonicum (strain LMG 29417 / CECT 9101 / MAFF 303099) (Mesorhizobium loti (strain MAFF 303099)).